Reading from the N-terminus, the 310-residue chain is Mitochondrial 2-oxodicarboxylate carrier 1 (310 aa).

6 helical membrane-spanning segments follow: residues 9–29 (LPFI…LLVM), 78–97 (SHLY…KRAI), 126–146 (IYSG…FELV), 179–199 (GLEA…GIIF), 219–239 (LIAG…FDVV), and 281–301 (MRLA…MDFF). 3 Solcar repeats span residues 9–108 (LPFI…FQTF), 120–204 (MTQK…IRKL), and 213–300 (EKTR…VMDF).

This sequence belongs to the mitochondrial carrier (TC 2.A.29) family.

It localises to the mitochondrion inner membrane. Transports C5-C7 oxodicarboxylates across the inner membranes of mitochondria. Can transport 2-oxoadipate, 2-oxoglutarate, adipate, glutarate, 2-oxopimelate, oxaloacetate, citrate and malate. The main physiological role is probably to supply 2-oxoadipate and 2-oxoglutarate from the mitochondrial matrix to the cytosol where they are used in the biosynthesis of lysine and glutamate, respectively, and in lysine catabolism. This Saccharomyces cerevisiae (strain ATCC 204508 / S288c) (Baker's yeast) protein is Mitochondrial 2-oxodicarboxylate carrier 1 (ODC1).